The following is a 215-amino-acid chain: MAERDSEPRVNIIRPDDEPEVEEERVPDPDMVIKHPLQNSWAMWFFKNDKSRDWKDNLRVITTFDTVEDFWGLYNHTLPASKLQSGCDYSVFKAGIQPMWEDAQNKKGGRWLINLNKTQRQTHLDDFWLETLLCLIGEGFDEHSEEICGATVNIRNKGDKLGLWTRDAQKTEATKKIGIKLKESLSVPPKIVIGFQAHSDTAGKAGSTVKNRFTV.

The interval Met1–Pro27 is disordered. Ser207 carries the phosphoserine; by PKC modification.

Belongs to the eukaryotic initiation factor 4E family. As to quaternary structure, eIF4F is a multi-subunit complex, the composition of which varies with external and internal environmental conditions. It is composed of at least eIF4A, eIF4E and eIF4G. eIF4E is also known to interact with other partners. Phosphorylation increases the ability of the protein to bind to mRNA caps and to form the eIF4F complex.

In terms of biological role, recognizes and binds the 7-methylguanosine-containing mRNA cap during an early step in the initiation of protein synthesis and facilitates ribosome binding by inducing the unwinding of the mRNAs secondary structures. The protein is Eukaryotic translation initiation factor 4E of Aplysia californica (California sea hare).